Here is a 384-residue protein sequence, read N- to C-terminus: uncharacterized protein (384 aa).

This is an uncharacterized protein from Methanocaldococcus jannaschii (strain ATCC 43067 / DSM 2661 / JAL-1 / JCM 10045 / NBRC 100440) (Methanococcus jannaschii).